Consider the following 152-residue polypeptide: Transcription elongation factor Spt5 (152 aa).

One can recognise a KOW domain in the interval 99 to 129; it reads EGDLVEVISGPFRGMQAQVVRVESTKNEVVL.

The protein belongs to the archaeal Spt5 family. Heterodimer composed of Spt4 and Spt5. Interacts with RNA polymerase (RNAP).

In terms of biological role, stimulates transcription elongation. The chain is Transcription elongation factor Spt5 from Sulfolobus acidocaldarius (strain ATCC 33909 / DSM 639 / JCM 8929 / NBRC 15157 / NCIMB 11770).